A 1414-amino-acid polypeptide reads, in one-letter code: DNA-directed RNA polymerase subunit beta' (1414 aa).

Residues Cys-70, Cys-72, Cys-85, and Cys-88 each coordinate Zn(2+). Mg(2+) contacts are provided by Asp-460, Asp-462, and Asp-464. Positions 814, 888, 895, and 898 each coordinate Zn(2+). Low complexity predominate over residues 1392-1403 (EQALSEALKSSA). The segment at 1392-1414 (EQALSEALKSSAPQEAKAAQKDE) is disordered.

The protein belongs to the RNA polymerase beta' chain family. As to quaternary structure, the RNAP catalytic core consists of 2 alpha, 1 beta, 1 beta' and 1 omega subunit. When a sigma factor is associated with the core the holoenzyme is formed, which can initiate transcription. Mg(2+) is required as a cofactor. The cofactor is Zn(2+).

It carries out the reaction RNA(n) + a ribonucleoside 5'-triphosphate = RNA(n+1) + diphosphate. Functionally, DNA-dependent RNA polymerase catalyzes the transcription of DNA into RNA using the four ribonucleoside triphosphates as substrates. This chain is DNA-directed RNA polymerase subunit beta', found in Coxiella burnetii (strain Dugway 5J108-111).